The sequence spans 368 residues: Glutamate 5-kinase (368 aa).

K12 contributes to the ATP binding site. Residues S52, D139, and N151 each contribute to the substrate site. Residues S171–D172 and T213–K219 each bind ATP. A PUA domain is found at K277–I354.

The protein belongs to the glutamate 5-kinase family.

It localises to the cytoplasm. It carries out the reaction L-glutamate + ATP = L-glutamyl 5-phosphate + ADP. It participates in amino-acid biosynthesis; L-proline biosynthesis; L-glutamate 5-semialdehyde from L-glutamate: step 1/2. Functionally, catalyzes the transfer of a phosphate group to glutamate to form L-glutamate 5-phosphate. The polypeptide is Glutamate 5-kinase (Pelagibacter ubique (strain HTCC1062)).